A 229-amino-acid polypeptide reads, in one-letter code: Aquaporin Z (229 aa).

Transmembrane regions (helical) follow at residues 8-28 and 33-53; these read FLGT…AAGF and IGFA…AYAI. Residues 62–64 carry the NPA 1 motif; it reads NPA. 3 consecutive transmembrane segments (helical) span residues 88–108, 129–149, and 158–178; these read VLGA…GAGF, LLAA…VIMG, and GFAP…SIPV. The NPA 2 signature appears at 184–186; the sequence is NPA. Residues 192–212 traverse the membrane as a helical segment; sequence ALFVGGWAVQQLWLFWLAPII.

This sequence belongs to the MIP/aquaporin (TC 1.A.8) family. As to quaternary structure, homotetramer.

It is found in the cell inner membrane. The enzyme catalyses H2O(in) = H2O(out). Functionally, channel that permits osmotically driven movement of water in both directions. It is involved in the osmoregulation and in the maintenance of cell turgor during volume expansion in rapidly growing cells. It mediates rapid entry or exit of water in response to abrupt changes in osmolarity. The sequence is that of Aquaporin Z from Chromobacterium violaceum (strain ATCC 12472 / DSM 30191 / JCM 1249 / CCUG 213 / NBRC 12614 / NCIMB 9131 / NCTC 9757 / MK).